The chain runs to 450 residues: Chromosomal replication initiator protein DnaA (450 aa).

Residues 1–69 (MHDVWRQATE…VGALSVTAGK (69 aa)) form a domain I, interacts with DnaA modulators region. Positions 69 to 113 (KKYFIELVVQEEDQNAEVPQAEDLIIKGHQEIEQPVTSQPETSSS) are domain II. Positions 114-330 (SLNPKYTFEL…GMLIRLGAYS (217 aa)) are domain III, AAA+ region. 4 residues coordinate ATP: Gly158, Gly160, Lys161, and Ser162. The tract at residues 331–450 (SLQGIPITLD…IEDIKLILLK (120 aa)) is domain IV, binds dsDNA.

It belongs to the DnaA family. Oligomerizes as a right-handed, spiral filament on DNA at oriC.

The protein resides in the cytoplasm. Plays an essential role in the initiation and regulation of chromosomal replication. ATP-DnaA binds to the origin of replication (oriC) to initiate formation of the DNA replication initiation complex once per cell cycle. Binds the DnaA box (a 9 base pair repeat at the origin) and separates the double-stranded (ds)DNA. Forms a right-handed helical filament on oriC DNA; dsDNA binds to the exterior of the filament while single-stranded (ss)DNA is stabiized in the filament's interior. The ATP-DnaA-oriC complex binds and stabilizes one strand of the AT-rich DNA unwinding element (DUE), permitting loading of DNA polymerase. After initiation quickly degrades to an ADP-DnaA complex that is not apt for DNA replication. Binds acidic phospholipids. The protein is Chromosomal replication initiator protein DnaA of Pelobacter propionicus (strain DSM 2379 / NBRC 103807 / OttBd1).